A 112-amino-acid polypeptide reads, in one-letter code: Cuticle protein AM1239 (112 aa).

A Chitin-binding type R&amp;R domain is found at aspartate 16 to alanine 85. Threonine 79 is a glycosylation site (O-linked (HexNAc) threonine).

In terms of tissue distribution, arthrodial membrane.

The protein is Cuticle protein AM1239 of Cancer pagurus (Rock crab).